Consider the following 1107-residue polypeptide: uncharacterized protein (1107 aa).

The span at 180-204 shows a compositional bias: low complexity; sequence SGNGSSGGNNNNNNNSLNNSNNSIG. 2 disordered regions span residues 180–251 and 501–530; these read SGNG…SGNN and LMNINNNNNNNNSNNNNNNNDQNKDKDNQM. Residues 205–215 show a composition bias toward gly residues; the sequence is SSGGNGGGGSN. Residues 219 to 237 are compositionally biased toward polar residues; it reads PSMSPQFTSISKTNSPQII. Low complexity-rich tracts occupy residues 238–251 and 501–521; these read NTSSNNLNSSSGNN and LMNINNNNNNNNSNNNNNNND. 2 coiled-coil regions span residues 789 to 816 and 940 to 1012; these read KKDIIEHLTQRHNQYQSNINEDEQIYRE and NIDH…NMLK.

This is an uncharacterized protein from Dictyostelium discoideum (Social amoeba).